The primary structure comprises 225 residues: RNA-binding protein 24 (225 aa).

An RRM domain is found at 11-88 (TKIFVGGLPY…RKANVNLAYL (78 aa)).

The protein localises to the nucleus. It is found in the cytoplasm. Multifunctional RNA-binding protein involved in the regulation of pre-mRNA splicing, mRNA stability and mRNA translation important for cell fate decision and differentiation. Plays a major role in pre-mRNA alternative splicing regulation. Mediates preferentially muscle-specific exon inclusion in numerous mRNAs important for striated cardiac and skeletal muscle cell differentiation. Binds to intronic splicing enhancer (ISE) composed of stretches of GU-rich motifs localized in flanking intron of exon that will be included by alternative splicing. Involved in embryonic stem cell (ESC) transition to cardiac cell differentiation by promoting pre-mRNA alternative splicing events of several pluripotency and/or differentiation genes. Plays a role in the regulation of mRNA stability and mRNA translation to which it is bound. Involved in myogenic differentiation by regulating MYOG levels. Binds to a huge amount of mRNAs. Involved in embryonic heart development and myogenic differentiation of somitic muscle progenitors. The sequence is that of RNA-binding protein 24 from Gallus gallus (Chicken).